The primary structure comprises 339 residues: Protein FAM50A (339 aa).

The segment at 1 to 31 (MAQYKGAASEAGRAMHLMKKREKQREQMEQM) is disordered. N-acetylalanine is present on A2. Residue K100 forms a Glycyl lysine isopeptide (Lys-Gly) (interchain with G-Cter in SUMO2) linkage. The segment at 150-177 (TTKKKKLGKNPDVDTSFLPDRDREEEEN) is disordered. The Nuclear localization signal signature appears at 152–155 (KKKK). Residues 168-177 (PDRDREEEEN) are compositionally biased toward basic and acidic residues.

It belongs to the FAM50 family. As to quaternary structure, interacts with EFTUD2, a component of the spliceosome U5 complex. Interacts with DDX41, a component of the spliceosome C complex. Widely expressed in embryonic and adult tissues.

It localises to the nucleus. Probably involved in the regulation of pre-mRNA splicing. The sequence is that of Protein FAM50A (Fam50a) from Mus musculus (Mouse).